The sequence spans 235 residues: N-alpha-acetyltransferase 10 (235 aa).

Position 1 is an N-acetylmethionine (Met-1). The interval 1 to 58 is interaction with NAA15; that stretch reads MNIRNARPEDLMNMQHCNLLCLPENYQMKYYFYHGLSWPQLSYIAEDENGKIVGYVLA. The 152-residue stretch at 1–152 folds into the N-acetyltransferase domain; it reads MNIRNARPED…DAYAMKRDLT (152 aa). Lys-136 is subject to N6-acetyllysine; by autocatalysis. The disordered stretch occupies residues 178-235; that stretch reads NKVESKGNSPPSSGEACREEKGLAAEDSGGDSKDLSEVSETTESTDVKDSSEASDSAS. Residues Ser-182, Ser-186, and Ser-205 each carry the phosphoserine modification. Over residues 193–213 the composition is skewed to basic and acidic residues; sequence ACREEKGLAAEDSGGDSKDLS. Ser-209 bears the Phosphoserine; by IKKB mark. Residues Ser-213 and Ser-216 each carry the phosphoserine modification.

This sequence belongs to the acetyltransferase family. ARD1 subfamily. In terms of assembly, component of the N-terminal acetyltransferase A complex (also called the NatA complex) composed of NAA10 and NAA15. Within the complex interacts with NAA15. Component of the N-terminal acetyltransferase A (NatA)/HYPK complex at least composed of NAA10, NAA15 and HYPK, which has N-terminal acetyltransferase activity. In complex with NAA15, interacts with HYPK. Component of the N-terminal acetyltransferase E (NatE) complex at least composed of NAA10, NAA15 and NAA50. Within the complex interacts with NAA15; the interaction is required for binding to NAAT50. Interacts with NAAT50. The interaction of the NatA complex with NAA50 reduces the acetylation activity of the NatA complex. Component of the N-terminal acetyltransferase E (NatE)/HYPK complex at least composed of NAA10, NAA15, NAA50 and HYPK. In complex with NAA15, interacts with HYPK; the interaction with HYPK reduces the capacity of the NatA complex to interact with NAA50. Interacts with HIF1A (via its ODD domain); the interaction increases HIF1A protein stability during normoxia, an down-regulates it when induced by hypoxia. Interacts with the ribosome. Binds to MYLK. Interacts with NAA16. Interacts (via its C-terminal domain) with TSC2, leading to its acetylation. Interacts with IKBKB. Interacts with HSPA1A and HSPA1B leading to its acetylation. Cleaved by caspases during apoptosis. In terms of processing, phosphorylation by IKBKB/IKKB at Ser-209 promotes its proteasome-mediated degradation. Post-translationally, autoacetylated at Lys-136 which stimulates its catalytic activity. As to expression, ubiquitous.

It is found in the cytoplasm. It localises to the nucleus. The catalysed reaction is N-terminal glycyl-[protein] + acetyl-CoA = N-terminal N(alpha)-acetylglycyl-[protein] + CoA + H(+). It carries out the reaction N-terminal L-alanyl-[protein] + acetyl-CoA = N-terminal N(alpha)-acetyl-L-alanyl-[protein] + CoA + H(+). It catalyses the reaction N-terminal L-seryl-[protein] + acetyl-CoA = N-terminal N(alpha)-acetyl-L-seryl-[protein] + CoA + H(+). The enzyme catalyses N-terminal L-valyl-[protein] + acetyl-CoA = N-terminal N(alpha)-acetyl-L-valyl-[protein] + CoA + H(+). The catalysed reaction is N-terminal L-cysteinyl-[protein] + acetyl-CoA = N-terminal N(alpha)-acetyl-L-cysteinyl-[protein] + CoA + H(+). It carries out the reaction N-terminal L-threonyl-[protein] + acetyl-CoA = N-terminal N(alpha)-acetyl-L-threonyl-[protein] + CoA + H(+). Functionally, catalytic subunit of N-terminal acetyltransferase complexes which display alpha (N-terminal) acetyltransferase activity. Acetylates amino termini that are devoid of initiator methionine. The alpha (N-terminal) acetyltransferase activity may be important for vascular, hematopoietic and neuronal growth and development. Without NAA15, displays epsilon (internal) acetyltransferase activity towards HIF1A, thereby promoting its degradation. Represses MYLK kinase activity by acetylation, and thus represses tumor cell migration. Acetylates, and stabilizes TSC2, thereby repressing mTOR activity and suppressing cancer development. Acetylates HSPA1A and HSPA1B at 'Lys-77' which enhances its chaperone activity and leads to preferential binding to co-chaperone HOPX. Acetylates HIST1H4A. Acts as a negative regulator of sister chromatid cohesion during mitosis. The chain is N-alpha-acetyltransferase 10 (NAA10) from Homo sapiens (Human).